Consider the following 86-residue polypeptide: Conotoxin Lt15a (86 aa).

An N-terminal signal peptide occupies residues 1 to 23 (MEKLTILILVATVLLAIQVLVQS). Residues 24–49 (DGENPVKGRVKHYAAKRFSALFRGPR) constitute a propeptide that is removed on maturation.

This sequence belongs to the conotoxin O2 superfamily. Post-translationally, contains 4 disulfide bonds. In terms of tissue distribution, expressed by the venom duct.

The protein localises to the secreted. In Conus litteratus (Lettered cone), this protein is Conotoxin Lt15a.